The sequence spans 671 residues: DNA ligase (671 aa).

Residues 37 to 41, 86 to 87, and glutamate 117 contribute to the NAD(+) site; these read DIEYD and SL. The N6-AMP-lysine intermediate role is filled by lysine 119. NAD(+) contacts are provided by arginine 140, glutamate 177, lysine 295, and lysine 319. Residues cysteine 413, cysteine 416, cysteine 431, and cysteine 437 each coordinate Zn(2+). In terms of domain architecture, BRCT spans 594-671; the sequence is IISAAVFGKT…DEEEMLNLLK (78 aa).

This sequence belongs to the NAD-dependent DNA ligase family. LigA subfamily. Requires Mg(2+) as cofactor. Mn(2+) is required as a cofactor.

It carries out the reaction NAD(+) + (deoxyribonucleotide)n-3'-hydroxyl + 5'-phospho-(deoxyribonucleotide)m = (deoxyribonucleotide)n+m + AMP + beta-nicotinamide D-nucleotide.. In terms of biological role, DNA ligase that catalyzes the formation of phosphodiester linkages between 5'-phosphoryl and 3'-hydroxyl groups in double-stranded DNA using NAD as a coenzyme and as the energy source for the reaction. It is essential for DNA replication and repair of damaged DNA. The polypeptide is DNA ligase (Polynucleobacter asymbioticus (strain DSM 18221 / CIP 109841 / QLW-P1DMWA-1) (Polynucleobacter necessarius subsp. asymbioticus)).